A 217-amino-acid chain; its full sequence is 3-isopropylmalate dehydratase small subunit (217 aa).

It belongs to the LeuD family. LeuD type 1 subfamily. As to quaternary structure, heterodimer of LeuC and LeuD.

It carries out the reaction (2R,3S)-3-isopropylmalate = (2S)-2-isopropylmalate. The protein operates within amino-acid biosynthesis; L-leucine biosynthesis; L-leucine from 3-methyl-2-oxobutanoate: step 2/4. Its function is as follows. Catalyzes the isomerization between 2-isopropylmalate and 3-isopropylmalate, via the formation of 2-isopropylmaleate. This is 3-isopropylmalate dehydratase small subunit from Paraburkholderia phymatum (strain DSM 17167 / CIP 108236 / LMG 21445 / STM815) (Burkholderia phymatum).